The sequence spans 194 residues: NADH-quinone oxidoreductase subunit B 1 (194 aa).

[4Fe-4S] cluster contacts are provided by cysteine 73, cysteine 74, cysteine 138, and cysteine 168.

Belongs to the complex I 20 kDa subunit family. As to quaternary structure, NDH-1 is composed of 14 different subunits. Subunits NuoB, C, D, E, F, and G constitute the peripheral sector of the complex. [4Fe-4S] cluster serves as cofactor.

Its subcellular location is the cell inner membrane. It catalyses the reaction a quinone + NADH + 5 H(+)(in) = a quinol + NAD(+) + 4 H(+)(out). NDH-1 shuttles electrons from NADH, via FMN and iron-sulfur (Fe-S) centers, to quinones in the respiratory chain. The immediate electron acceptor for the enzyme in this species is believed to be ubiquinone. Couples the redox reaction to proton translocation (for every two electrons transferred, four hydrogen ions are translocated across the cytoplasmic membrane), and thus conserves the redox energy in a proton gradient. The chain is NADH-quinone oxidoreductase subunit B 1 from Rhizobium etli (strain CIAT 652).